The following is a 361-amino-acid chain: ATP-dependent 6-phosphofructokinase 1 (361 aa).

ATP contacts are provided by residues G14, 79 to 80 (KG), and 116 to 119 (GDGS). Mg(2+) is bound at residue D117. Substrate is bound by residues 140–142 (TID), R177, 184–186 (MGR), E237, R278, and 284–287 (HIQR). The active-site Proton acceptor is D142.

The protein belongs to the phosphofructokinase type A (PFKA) family. Mixed-substrate PFK group III subfamily. In terms of assembly, homodimer or homotetramer. It depends on Mg(2+) as a cofactor.

The protein localises to the cytoplasm. It carries out the reaction beta-D-fructose 6-phosphate + ATP = beta-D-fructose 1,6-bisphosphate + ADP + H(+). The protein operates within carbohydrate degradation; glycolysis; D-glyceraldehyde 3-phosphate and glycerone phosphate from D-glucose: step 3/4. Its function is as follows. Catalyzes the phosphorylation of D-fructose 6-phosphate to fructose 1,6-bisphosphate by ATP, the first committing step of glycolysis. The polypeptide is ATP-dependent 6-phosphofructokinase 1 (Synechocystis sp. (strain ATCC 27184 / PCC 6803 / Kazusa)).